Here is an 804-residue protein sequence, read N- to C-terminus: Zinc finger protein YGR067C (804 aa).

C2H2-type zinc fingers lie at residues 8–30 and 36–59; these read YICSFCLKPFSRSEHKIRHERSH and FQCQVCKHSFVRRDLLQRHIRTVH. Residues 782-796 show a composition bias toward polar residues; that stretch reads QEFSASSTDNKQSKN. Residues 782–804 form a disordered region; it reads QEFSASSTDNKQSKNIEIFSQIK.

It is found in the nucleus. The sequence is that of Zinc finger protein YGR067C from Saccharomyces cerevisiae (strain ATCC 204508 / S288c) (Baker's yeast).